Reading from the N-terminus, the 186-residue chain is GTP-dependent dephospho-CoA kinase (186 aa).

The GTP site is built by aspartate 43, isoleucine 44, valine 45, aspartate 62, glutamate 120, and aspartate 143.

This sequence belongs to the GTP-dependent DPCK family.

It catalyses the reaction 3'-dephospho-CoA + GTP = GDP + CoA + H(+). The protein operates within cofactor biosynthesis; coenzyme A biosynthesis. Catalyzes the GTP-dependent phosphorylation of the 3'-hydroxyl group of dephosphocoenzyme A to form coenzyme A (CoA). This Haloquadratum walsbyi (strain DSM 16790 / HBSQ001) protein is GTP-dependent dephospho-CoA kinase.